The chain runs to 76 residues: Exodeoxyribonuclease 7 small subunit (76 aa).

It belongs to the XseB family. As to quaternary structure, heterooligomer composed of large and small subunits.

The protein resides in the cytoplasm. The enzyme catalyses Exonucleolytic cleavage in either 5'- to 3'- or 3'- to 5'-direction to yield nucleoside 5'-phosphates.. Bidirectionally degrades single-stranded DNA into large acid-insoluble oligonucleotides, which are then degraded further into small acid-soluble oligonucleotides. The chain is Exodeoxyribonuclease 7 small subunit from Geobacillus thermodenitrificans (strain NG80-2).